A 181-amino-acid polypeptide reads, in one-letter code: Ribosome maturation factor RimM (181 aa).

Residues 97-170 (AGEFWLPDLM…RIEVVAIPGL (74 aa)) form the PRC barrel domain.

This sequence belongs to the RimM family. As to quaternary structure, binds ribosomal protein uS19.

It localises to the cytoplasm. Its function is as follows. An accessory protein needed during the final step in the assembly of 30S ribosomal subunit, possibly for assembly of the head region. Essential for efficient processing of 16S rRNA. May be needed both before and after RbfA during the maturation of 16S rRNA. It has affinity for free ribosomal 30S subunits but not for 70S ribosomes. This Gloeobacter violaceus (strain ATCC 29082 / PCC 7421) protein is Ribosome maturation factor RimM.